The chain runs to 1931 residues: Chitin synthase 5 (1931 aa).

The Myosin motor domain occupies 11–777 (LGVTDLSSLA…LFRFLEDRLR (767 aa)). 122–129 (GPTGSGKS) contributes to the ATP binding site. N-linked (GlcNAc...) asparagine glycans are attached at residues Asn-510, Asn-538, and Asn-676. Residues 655–677 (VDSLLKSFDQTQTWYIFALRPND) form an actin-binding region. The tract at residues 798 to 817 (DPFSPHRYQPTSFDSQDHVY) is disordered. Asn-842 carries an N-linked (GlcNAc...) asparagine glycan. The next 2 helical transmembrane spans lie at 912 to 932 (WVWLCSILTWWIPGFLLSKIA) and 951 to 971 (MIIWFICGCAIFVIAILGPVI). 3 N-linked (GlcNAc...) asparagine glycosylation sites follow: Asn-1062, Asn-1078, and Asn-1146. Residues 1220 to 1240 (ILLALSCVMVAVIGFKFLSAL) traverse the membrane as a helical segment. N-linked (GlcNAc...) asparagine glycosylation occurs at Asn-1583. 3 consecutive transmembrane segments (helical) span residues 1615 to 1635 (LSTIIAPVTVAYIVYLIYLIV), 1641 to 1661 (IPTLSIIMLAAIYGLQAMIFI), and 1668 to 1688 (MIAWMIFYICAIPVFSFLLPL). The disordered stretch occupies residues 1826 to 1847 (AHRPSLDDTSSFHQPYQPAPRP). Positions 1875–1930 (AITDSQLERSIRKICANAELDKLTKKGVRKELEREYGVELTERREAINRLVEKVLT) constitute a DEK-C domain.

The protein in the N-terminal section; belongs to the TRAFAC class CC myosin-kinesin ATPase superfamily. Myosin family. It in the C-terminal section; belongs to the chitin synthase family. Class V subfamily.

The protein localises to the cell membrane. Its subcellular location is the cell septum. It is found in the cell tip. The enzyme catalyses [(1-&gt;4)-N-acetyl-beta-D-glucosaminyl](n) + UDP-N-acetyl-alpha-D-glucosamine = [(1-&gt;4)-N-acetyl-beta-D-glucosaminyl](n+1) + UDP + H(+). In terms of biological role, polymerizes chitin, a structural polymer of the cell wall and septum, by transferring the sugar moiety of UDP-GlcNAc to the non-reducing end of the growing chitin polymer. Produces a large proportion of the chitin that is not deacetylated to chitosan. This Cryptococcus neoformans var. grubii serotype A (strain H99 / ATCC 208821 / CBS 10515 / FGSC 9487) (Filobasidiella neoformans var. grubii) protein is Chitin synthase 5.